Reading from the N-terminus, the 153-residue chain is 3-hydroxyacyl-[acyl-carrier-protein] dehydratase FabZ (153 aa).

The active site involves His-57.

It belongs to the thioester dehydratase family. FabZ subfamily.

Its subcellular location is the cytoplasm. It carries out the reaction a (3R)-hydroxyacyl-[ACP] = a (2E)-enoyl-[ACP] + H2O. In terms of biological role, involved in unsaturated fatty acids biosynthesis. Catalyzes the dehydration of short chain beta-hydroxyacyl-ACPs and long chain saturated and unsaturated beta-hydroxyacyl-ACPs. The polypeptide is 3-hydroxyacyl-[acyl-carrier-protein] dehydratase FabZ (Aeromonas hydrophila subsp. hydrophila (strain ATCC 7966 / DSM 30187 / BCRC 13018 / CCUG 14551 / JCM 1027 / KCTC 2358 / NCIMB 9240 / NCTC 8049)).